The following is a 286-amino-acid chain: Phosphate import ATP-binding protein PstB (286 aa).

One can recognise an ABC transporter domain in the interval 40–281 (IAVRNLDFYY…PREQRTQEYI (242 aa)). 72–79 (GPSGCGKS) is an ATP binding site.

It belongs to the ABC transporter superfamily. Phosphate importer (TC 3.A.1.7) family. In terms of assembly, the complex is composed of two ATP-binding proteins (PstB), two transmembrane proteins (PstC and PstA) and a solute-binding protein (PstS).

It localises to the cell inner membrane. It catalyses the reaction phosphate(out) + ATP + H2O = ADP + 2 phosphate(in) + H(+). Its function is as follows. Part of the ABC transporter complex PstSACB involved in phosphate import. Responsible for energy coupling to the transport system. This is Phosphate import ATP-binding protein PstB from Granulibacter bethesdensis (strain ATCC BAA-1260 / CGDNIH1).